An 848-amino-acid chain; its full sequence is ATP-dependent Clp protease ATP-binding subunit ClpC1 (848 aa).

Positions 2 to 144 constitute a Clp R domain; the sequence is FERFTDRARK…RQQVIQLLSG (143 aa). Repeat stretches follow at residues 5–70 and 80–144; these read FTDR…IGQG and FTPR…LLSG. Residues 171-418 form an i region; sequence LDQFGRNLTA…RMRIRRMTAP (248 aa). ATP is bound at residue 216 to 223; it reads GEPGVGKT. One can recognise a UVR domain in the interval 425 to 460; that stretch reads DEKIAEARREKESAIDAQDFEKAASLRDREKTLVAQ. Residues 479 to 670 are II; that stretch reads VDDEQIAEVL…VLIFTSNLGT (192 aa). ATP is bound at residue 553 to 560; that stretch reads GPSGVGKT. Positions 821–848 are disordered; sequence TGTRKPPAEPDLAKAGAHSAGGPEPAAR.

It belongs to the ClpA/ClpB family. ClpC subfamily.

Functionally, ATP-dependent specificity component of the Clp protease. It directs the protease to specific substrates. Can perform chaperone functions in the absence of ClpP. This Mycobacterium tuberculosis (strain CDC 1551 / Oshkosh) protein is ATP-dependent Clp protease ATP-binding subunit ClpC1 (clpC1).